Here is a 264-residue protein sequence, read N- to C-terminus: 3-methyl-2-oxobutanoate hydroxymethyltransferase (264 aa).

Residues aspartate 45 and aspartate 84 each contribute to the Mg(2+) site. 3-methyl-2-oxobutanoate contacts are provided by residues 45–46 (DS), aspartate 84, and lysine 112. Residue glutamate 114 participates in Mg(2+) binding. The Proton acceptor role is filled by glutamate 181.

The protein belongs to the PanB family. As to quaternary structure, homodecamer; pentamer of dimers. Mg(2+) is required as a cofactor.

It localises to the cytoplasm. It catalyses the reaction 3-methyl-2-oxobutanoate + (6R)-5,10-methylene-5,6,7,8-tetrahydrofolate + H2O = 2-dehydropantoate + (6S)-5,6,7,8-tetrahydrofolate. It functions in the pathway cofactor biosynthesis; (R)-pantothenate biosynthesis; (R)-pantoate from 3-methyl-2-oxobutanoate: step 1/2. Its function is as follows. Catalyzes the reversible reaction in which hydroxymethyl group from 5,10-methylenetetrahydrofolate is transferred onto alpha-ketoisovalerate to form ketopantoate. The polypeptide is 3-methyl-2-oxobutanoate hydroxymethyltransferase (Vibrio campbellii (strain ATCC BAA-1116)).